The chain runs to 196 residues: Large ribosomal subunit protein bL9 (196 aa).

Residues 174–196 (QAAADLLEGGAGQQASEYTEAQA) form a disordered region. Residues 186–196 (QQASEYTEAQA) are compositionally biased toward polar residues.

The protein belongs to the bacterial ribosomal protein bL9 family.

In terms of biological role, binds to the 23S rRNA. In Phenylobacterium zucineum (strain HLK1), this protein is Large ribosomal subunit protein bL9.